A 196-amino-acid chain; its full sequence is ATP-dependent Clp protease proteolytic subunit (196 aa).

The active-site Nucleophile is the Ser-96. The active site involves His-121.

The protein belongs to the peptidase S14 family. Fourteen ClpP subunits assemble into 2 heptameric rings which stack back to back to give a disk-like structure with a central cavity, resembling the structure of eukaryotic proteasomes.

It is found in the cytoplasm. It carries out the reaction Hydrolysis of proteins to small peptides in the presence of ATP and magnesium. alpha-casein is the usual test substrate. In the absence of ATP, only oligopeptides shorter than five residues are hydrolyzed (such as succinyl-Leu-Tyr-|-NHMec, and Leu-Tyr-Leu-|-Tyr-Trp, in which cleavage of the -Tyr-|-Leu- and -Tyr-|-Trp bonds also occurs).. Cleaves peptides in various proteins in a process that requires ATP hydrolysis. Has a chymotrypsin-like activity. Plays a major role in the degradation of misfolded proteins. The polypeptide is ATP-dependent Clp protease proteolytic subunit (Streptococcus pyogenes serotype M3 (strain SSI-1)).